The sequence spans 877 residues: GTPase activating protein homolog 2 (877 aa).

The region spanning 14–285 (FKFTDNLWDG…SVEMIDITND (272 aa)) is the F-BAR domain. Residues 130-214 (QEGIKLKQDM…SNCDEEYREQ (85 aa)) are a coiled coil. In terms of domain architecture, Rho-GAP spans 374-560 (VSLDELMNRQ…TLIKQIPPPL (187 aa)). Disordered stretches follow at residues 589 to 612 (DQLSNDDNNNSNTNTSNISIGSGS), 644 to 704 (LPPL…AEPT), and 749 to 800 (AATP…LAST). Low complexity-rich tracts occupy residues 593–612 (NDDNNNSNTNTSNISIGSGS), 653–676 (SGSGNESNSSSSNSTTTPTGSPTT), and 749–779 (AATPTTTTPTTTPTTTTSPTTATIPAVSTST). Positions 780–800 (IKTSSPDRTTPLTSSPPLAST) are enriched in polar residues.

Its subcellular location is the cytoplasm. The protein resides in the contractile vacuole. Functionally, rho GTPase-activating protein involved in the signal transduction pathway. Regulator of the contractile vacuole network as well as involved in driving vacuole emptying. This Dictyostelium discoideum (Social amoeba) protein is GTPase activating protein homolog 2 (mgp2).